Consider the following 706-residue polypeptide: Transmembrane 9 superfamily member 3 (706 aa).

A signal peptide spans 1–33; the sequence is MRVRPKRSVITLMAIVVVMLILRNQFYSSRTRG. Residues 34-290 lie on the Lumenal side of the membrane; it reads HGQEPVISSS…LSDEQSIQFH (257 aa). A helical membrane pass occupies residues 291 to 311; sequence WMSLANSVGIVLSISFITLII. Topologically, residues 312-371 are cytoplasmic; it reads YVRVMYTDKSNSKSPKYMINIEGIETEDDLDDDKYGKYSVYTVAKDWIQNGRPNLFGLKV. The helical transmembrane segment at 372-392 threads the bilayer; the sequence is LILLVSFGVQFLFTIIGSLTI. Residues 393–405 are Lumenal-facing; it reads SCSMNKLHNVRNS. The helical transmembrane segment at 406-426 threads the bilayer; the sequence is VLTMAILFFVLGAFMASFVGT. Residues 427-456 lie on the Cytoplasmic side of the membrane; sequence RLSMVTKTKRTKANYLDDNRYLKDYKKFSP. The helical transmembrane segment at 457–477 threads the bilayer; sequence IFTILCGSSLPGIVMVSTFLL. Residues 478 to 494 are Lumenal-facing; sequence NSIVWAHDSTSALPFKT. The helical transmembrane segment at 495-515 threads the bilayer; it reads IVFFMSIYFIVCIPLSLFGGI. Over 516-553 the chain is Cytoplasmic; the sequence is VANNIPLPQYWLSGITKDESNSDGNGLFVPKSRAKFNP. A helical membrane pass occupies residues 554 to 574; sequence LVYCGIYLCGIFPLLVIYVEM. The Lumenal segment spans residues 575–592; sequence QYVYKSLWLEKTTFYYFY. The chain crosses the membrane as a helical span at residues 593 to 613; that stretch reads GFLFLSIILLCVLTMEISIIG. Residues 614–637 are Cytoplasmic-facing; it reads SYLLMRFCFEDKVVRNNWRWKCFE. A helical transmembrane segment spans residues 638-658; it reads MGFSGGVYMELYSLYYIFAVL. The Lumenal portion of the chain corresponds to 659-665; it reads NIHGFSS. The helical transmembrane segment at 666–686 threads the bilayer; that stretch reads ILISICYSLIFNVMCSLGLGA. Residues 687-706 are Cytoplasmic-facing; the sequence is LSYLTASWFINKIYHQKVNL.

The protein belongs to the nonaspanin (TM9SF) (TC 9.A.2) family.

The protein resides in the golgi apparatus membrane. With EMP70 and TMN2, plays a critical role in the late stages of a nutrient-controlled pathway notably regulating FLO11 gene expression. Acts downstream of RAS2 and TOR. Essential for cell adhesion and filamentous growth. May play a role as effector of cellular copper homeostasis. This is Transmembrane 9 superfamily member 3 (TMN3) from Saccharomyces cerevisiae (strain ATCC 204508 / S288c) (Baker's yeast).